A 274-amino-acid polypeptide reads, in one-letter code: Diaminopimelate epimerase (274 aa).

Asparagine 11, glutamine 44, and asparagine 64 together coordinate substrate. The Proton donor role is filled by cysteine 73. Substrate-binding positions include glycine 74–asparagine 75, asparagine 157, asparagine 190, and glutamate 208–arginine 209. Cysteine 217 serves as the catalytic Proton acceptor. Substrate is bound at residue glycine 218–serine 219.

The protein belongs to the diaminopimelate epimerase family. In terms of assembly, homodimer.

It is found in the cytoplasm. It catalyses the reaction (2S,6S)-2,6-diaminopimelate = meso-2,6-diaminopimelate. Its pathway is amino-acid biosynthesis; L-lysine biosynthesis via DAP pathway; DL-2,6-diaminopimelate from LL-2,6-diaminopimelate: step 1/1. Its function is as follows. Catalyzes the stereoinversion of LL-2,6-diaminopimelate (L,L-DAP) to meso-diaminopimelate (meso-DAP), a precursor of L-lysine and an essential component of the bacterial peptidoglycan. This is Diaminopimelate epimerase from Histophilus somni (strain 129Pt) (Haemophilus somnus).